Reading from the N-terminus, the 134-residue chain is Small ribosomal subunit protein uS11 (134 aa).

The protein belongs to the universal ribosomal protein uS11 family. As to quaternary structure, part of the 30S ribosomal subunit. Interacts with proteins S7 and S18. Binds to IF-3.

In terms of biological role, located on the platform of the 30S subunit, it bridges several disparate RNA helices of the 16S rRNA. Forms part of the Shine-Dalgarno cleft in the 70S ribosome. This chain is Small ribosomal subunit protein uS11, found in Paraburkholderia xenovorans (strain LB400).